The primary structure comprises 132 residues: Agouti-signaling protein (132 aa).

The N-terminal stretch at 1–22 (MDVTRLLLATLLVFLCFFTADS) is a signal peptide. N-linked (GlcNAc...) asparagine glycosylation occurs at N39. Residues 62–85 (ISRKEAEKKRSSKKEASMKTVARP) are disordered. Residues 63 to 78 (SRKEAEKKRSSKKEAS) show a composition bias toward basic and acidic residues. 5 disulfides stabilise this stretch: C93-C108, C100-C114, C107-C125, C111-C132, and C116-C123. In terms of domain architecture, Agouti spans 93–132 (CVATRNSCKPPAPACCDPCASCQCRFFRSACSCRVLSLNC).

It localises to the secreted. In terms of biological role, involved in the regulation of melanogenesis. The binding of ASP to MC1R precludes alpha-MSH initiated signaling and thus blocks production of cAMP, leading to a down-regulation of eumelanogenesis (brown/black pigment) and thus increasing synthesis of pheomelanin (yellow/red pigment). The chain is Agouti-signaling protein (ASIP) from Pongo pygmaeus (Bornean orangutan).